The chain runs to 278 residues: HTH-type transcriptional activator RhaS (278 aa).

The HTH araC/xylS-type domain maps to 174–272 (NLLLAWLEDH…NWSPRDIRQG (99 aa)). DNA-binding regions (H-T-H motif) lie at residues 191–212 (DAVA…KQQT) and 239–262 (VTDI…RREF).

As to quaternary structure, binds DNA as a dimer.

Its subcellular location is the cytoplasm. Functionally, activates expression of the rhaBAD and rhaT operons. This is HTH-type transcriptional activator RhaS from Shigella sonnei (strain Ss046).